Here is a 400-residue protein sequence, read N- to C-terminus: 3-phenylpropionate/cinnamic acid dioxygenase ferredoxin--NAD(+) reductase component (400 aa).

5 to 36 (TIIIVGGGQAAAMAAASLRQQGFTGELHLFSD) provides a ligand contact to FAD. Position 146–174 (146–174 (SVVIVGAGTIGLELAASATQRGCKATVIE)) interacts with NAD(+).

Belongs to the bacterial ring-hydroxylating dioxygenase ferredoxin reductase family. As to quaternary structure, this dioxygenase system consists of four proteins: the two subunits of the hydroxylase component (HcaE and HcaF), a ferredoxin (HcaC) and a ferredoxin reductase (HcaD). FAD is required as a cofactor.

It catalyses the reaction 2 reduced [2Fe-2S]-[ferredoxin] + NAD(+) + H(+) = 2 oxidized [2Fe-2S]-[ferredoxin] + NADH. It participates in aromatic compound metabolism; 3-phenylpropanoate degradation. In terms of biological role, part of the multicomponent 3-phenylpropionate dioxygenase, that converts 3-phenylpropionic acid (PP) and cinnamic acid (CI) into 3-phenylpropionate-dihydrodiol (PP-dihydrodiol) and cinnamic acid-dihydrodiol (CI-dihydrodiol), respectively. The chain is 3-phenylpropionate/cinnamic acid dioxygenase ferredoxin--NAD(+) reductase component from Escherichia coli O7:K1 (strain IAI39 / ExPEC).